The primary structure comprises 23 residues: Toxin Acra2 (23 aa).

Positions 2-23 constitute an LCN-type CS-alpha/beta domain; that stretch reads KDGYIVDSNGCAPECFPTNXGC.

Post-translationally, contains 4 disulfide bonds. In terms of tissue distribution, expressed by the venom gland.

The protein resides in the secreted. Excitatory insect toxins induce a spastic paralysis. They bind voltage-independently at site-4 of sodium channels (Nav) and shift the voltage of activation toward more negative potentials thereby affecting sodium channel activation and promoting spontaneous and repetitive firing. Is lethal to mice. Is about 1% of the total protein in the venom. This chain is Toxin Acra2, found in Androctonus crassicauda (Arabian fat-tailed scorpion).